The sequence spans 349 residues: MAGIVVRSESAVAVMGAGAWGTALAKVLIDAGGPEAGVVLWARRPDVAERINTTRCNRAYLPGTLLPPGIRATADPADALRGASTVLLGVPAQRMRANLERWGGLVADGATLVSLAKGIELGTLMRMSQVIVSVTGVDPAQVAVLSGPNLASEIAQCQPAATVIACSDLGRAVALQRMLSSGYFRPYTNSDVVGTEIGGVCKNVIALACGMAAGVGFGENTAATIITRGLAEIIRLGMALGAQVTTLAGLAGVGDLVATCTSPHSRNRSLGERLGRGEIMQSILHGMDGSDGGDGYVVEGVTSCASVLALASSYDVEMPLTDAVHRVCHKGLSVEKAMALLLGRSTKSE.

W20, R43, R44, and K117 together coordinate NADPH. The sn-glycerol 3-phosphate site is built by K117 and G147. A151 contributes to the NADPH binding site. Sn-glycerol 3-phosphate contacts are provided by K202, D255, S265, R266, and N267. Catalysis depends on K202, which acts as the Proton acceptor. R266 contacts NADPH. V297 and E299 together coordinate NADPH.

Belongs to the NAD-dependent glycerol-3-phosphate dehydrogenase family.

It localises to the cytoplasm. The catalysed reaction is sn-glycerol 3-phosphate + NAD(+) = dihydroxyacetone phosphate + NADH + H(+). It carries out the reaction sn-glycerol 3-phosphate + NADP(+) = dihydroxyacetone phosphate + NADPH + H(+). Its pathway is membrane lipid metabolism; glycerophospholipid metabolism. Its function is as follows. Catalyzes the reduction of the glycolytic intermediate dihydroxyacetone phosphate (DHAP) to sn-glycerol 3-phosphate (G3P), the key precursor for phospholipid synthesis. The polypeptide is Glycerol-3-phosphate dehydrogenase [NAD(P)+] (Mycobacterium leprae (strain TN)).